The sequence spans 337 residues: Pyridoxal 5'-phosphate synthase subunit PdxS (337 aa).

A D-ribose 5-phosphate-binding site is contributed by Asp-63. Lys-120 functions as the Schiff-base intermediate with D-ribose 5-phosphate in the catalytic mechanism. Gly-192 provides a ligand contact to D-ribose 5-phosphate. Lys-204 contributes to the D-glyceraldehyde 3-phosphate binding site. D-ribose 5-phosphate contacts are provided by residues Gly-253 and 274–275 (GS).

It belongs to the PdxS/SNZ family. In the presence of PdxT, forms a dodecamer of heterodimers.

It carries out the reaction aldehydo-D-ribose 5-phosphate + D-glyceraldehyde 3-phosphate + L-glutamine = pyridoxal 5'-phosphate + L-glutamate + phosphate + 3 H2O + H(+). The protein operates within cofactor biosynthesis; pyridoxal 5'-phosphate biosynthesis. Catalyzes the formation of pyridoxal 5'-phosphate from ribose 5-phosphate (RBP), glyceraldehyde 3-phosphate (G3P) and ammonia. The ammonia is provided by the PdxT subunit. Can also use ribulose 5-phosphate and dihydroxyacetone phosphate as substrates, resulting from enzyme-catalyzed isomerization of RBP and G3P, respectively. This chain is Pyridoxal 5'-phosphate synthase subunit PdxS, found in Aeropyrum pernix (strain ATCC 700893 / DSM 11879 / JCM 9820 / NBRC 100138 / K1).